We begin with the raw amino-acid sequence, 476 residues long: MHDIKSIRDNPQAFDAAFTRRGLAPIADSLIKLDETRRIAIIASEQAQARRNAASKEIGEAKKAKDNARAEALMAEVTELKTTMPALDEAVKAADAALKKALSEIPNLPLAEVPQGADEHGNVVRSHFGAPRSYAFTPKPHYELGEALGQMDFEAAAKMSGARFVVLKKGLARLERAIGQFFLDVHTGEHGYTEVNPPLLVKDDAMFGTAQLPKFSNDQFRVDTEEIQIKSAYEEFEKAKNAILNYVEEAGIKSAREEKLEVLGFAYEPNPDRRWLIPTAEVSLTNLVRESILDEKELPMRLTALTPCFRAEAGAAGRDTRGMIRQHQFTKVELVSITTPEQSKDEHERMLACAEEVLRRLGLHYRVMTLCTGDMGFASQKTYDIEVWMPGQGEGGAYREISSCSVCGDFQARRMDARSRGPDGKPRFVHTLNGSGTAVGRALIAVIENYQQEDGSIAVPDALLPYMGGLKVIANS.

Thr-279–Glu-281 contributes to the L-serine binding site. ATP is bound at residue Arg-310–Glu-312. Residue Glu-333 coordinates L-serine. Glu-400–Ser-403 lines the ATP pocket. Ser-435 provides a ligand contact to L-serine.

Belongs to the class-II aminoacyl-tRNA synthetase family. Type-1 seryl-tRNA synthetase subfamily. Homodimer. The tRNA molecule binds across the dimer.

The protein resides in the cytoplasm. It carries out the reaction tRNA(Ser) + L-serine + ATP = L-seryl-tRNA(Ser) + AMP + diphosphate + H(+). It catalyses the reaction tRNA(Sec) + L-serine + ATP = L-seryl-tRNA(Sec) + AMP + diphosphate + H(+). It functions in the pathway aminoacyl-tRNA biosynthesis; selenocysteinyl-tRNA(Sec) biosynthesis; L-seryl-tRNA(Sec) from L-serine and tRNA(Sec): step 1/1. Catalyzes the attachment of serine to tRNA(Ser). Is also able to aminoacylate tRNA(Sec) with serine, to form the misacylated tRNA L-seryl-tRNA(Sec), which will be further converted into selenocysteinyl-tRNA(Sec). The polypeptide is Serine--tRNA ligase (Rhodopseudomonas palustris (strain BisA53)).